The chain runs to 961 residues: Cytochrome b5-like reductase apf12 (961 aa).

A298 is a binding site for FAD. The 120-residue stretch at 429–548 folds into the FAD-binding FR-type domain; the sequence is ARPQVDAFAW…IKPAPHFRIA (120 aa). NADP(+) is bound by residues 453–456, 499–500, and G753; these read SRIQ and SK. Residues 716–793 enclose the Cytochrome b5 heme-binding domain; the sequence is LNQITKLELA…LNEMVIGRLD (78 aa). Residue 753–755 coordinates FAD; the sequence is GGE.

This sequence belongs to the flavoprotein pyridine nucleotide cytochrome reductase family. Requires FAD as cofactor.

It functions in the pathway secondary metabolite biosynthesis. Functionally, cytochrome b5-like reductase; part of the gene cluster that mediates the biosynthesis of the cyclic tetrapeptide apicidin F (APF). The non-ribosomal peptide synthetase apf1 incorporates four different amino acids to produce apicidin F: L-phenylalanine, D-pipecolic acid (D-pip), N-methoxy-L-tryptophan and L-2-aminooctanedioic acid. L-Phenylalanine is the only proteinogenic amino acid directly used by apf1. The 3 other apf1 substrates are non-proteinogenic and have to be modified by other enzymes of the cluster. Lysine is converted to delta-1-pyrroline-5-carboxylate (P5C) which is reduced to L-pipecolic acid (L-pip) by apf3. L-pip is epimerized to D-pip, probably by apf1 activity, prior to incorporation. L-Tryptophan is N-oxidyzed by one of the cytochrome P450 monooxygenases (apf7 or apf8), and further methylated at the hydroxy group by the O-methyltransferase apf6 to yield N-methoxy-L-tryptophan. The synthesis of the fourth apf1 substrate is more complex. The fatty acid synthase apf5 is involved in the synthesis of the octanoic acid backbone of L-2-aminooctanedioic acid by fixing one acetyl-CoA unit and three malonyl-CoA units. Then one of the cytochrome P450 monooxygenases (apf7 or apf8) may oxidize this backbone to 2-oxooctanoic acid. The aminotransferase apf4 is predicted to catalyze the exchange of the keto group with an amino group. The next step would be the oxidation of 2-aminooctanoic acid by one of the cytochrome P450 monooxygenases (apf7 or apf8). The last step is the oxidation of 2-amino-8-hydroxyoctanoic acid to 2-aminooctanedioic acid is catalyzed by the FAD-dependent monooxygenase apf9. This Gibberella fujikuroi (strain CBS 195.34 / IMI 58289 / NRRL A-6831) (Bakanae and foot rot disease fungus) protein is Cytochrome b5-like reductase apf12.